A 1034-amino-acid chain; its full sequence is Platelet endothelial aggregation receptor 1 (1034 aa).

A signal peptide spans 1 to 18 (MPLCPLLLLALGLRLTGT). The Extracellular portion of the chain corresponds to 19 to 754 (LNSNDPNVCT…PTSPVTHNSL (736 aa)). An EMI domain is found at 23 to 101 (DPNVCTFWES…YYESRGACVP (79 aa)). Disulfide bonds link Cys-27–Cys-89, Cys-53–Cys-63, and Cys-88–Cys-99. An N-linked (GlcNAc...) asparagine glycan is attached at Asn-150. EGF-like domains are found at residues 181-215 (YGPA…PSCN), 223-258 (DGFF…VICS), 266-301 (HGPN…DRCQ), 309-344 (FGQD…DRCT), and 398-433 (HGPG…PHCA). 5 disulfide bridges follow: Cys-185–Cys-196, Cys-189–Cys-203, Cys-205–Cys-214, Cys-233–Cys-246, and Cys-248–Cys-257. A glycan (N-linked (GlcNAc...) asparagine) is linked at Asn-269. Cystine bridges form between Cys-270–Cys-282, Cys-276–Cys-289, Cys-291–Cys-300, Cys-313–Cys-325, Cys-319–Cys-332, Cys-334–Cys-343, Cys-402–Cys-414, Cys-408–Cys-421, and Cys-423–Cys-432. Asn-474 is a glycosylation site (N-linked (GlcNAc...) asparagine). 4 consecutive EGF-like domains span residues 484–519 (WGFN…AHCQ), 575–605 (SNTC…PSCQ), 613–648 (YGKR…PDCS), and 656–691 (WGLK…PNCL). Intrachain disulfides connect Cys-488–Cys-500, Cys-494–Cys-507, Cys-509–Cys-518, Cys-578–Cys-586, Cys-580–Cys-593, Cys-595–Cys-604, Cys-617–Cys-629, Cys-622–Cys-636, Cys-638–Cys-647, Cys-660–Cys-672, Cys-666–Cys-679, and Cys-681–Cys-690. A helical transmembrane segment spans residues 755-775 (GAVIGIAVLGTLVVALIALFI). Residues 776–1034 (GYRQWQKGKE…PSPPSRRQDR (259 aa)) lie on the Cytoplasmic side of the membrane. The tract at residues 823–883 (TLSQCSPNPP…PHERGASHLD (61 aa)) is disordered. The span at 851–883 (RPSRAHGRENHVTLPADWKHRREPHERGASHLD) shows a compositional bias: basic and acidic residues. Tyr-923 is subject to Phosphotyrosine. Residues 925–1034 (TIRDLPSLPG…PSPPSRRQDR (110 aa)) are disordered. Ser-951 carries the phosphoserine modification. Over residues 972–991 (DSGTYEQPSPLSHNEESLGS) the composition is skewed to polar residues. Ser-1026 is modified (phosphoserine).

The protein belongs to the MEGF family. In terms of assembly, interacts with SHC2 upon its aggregation-induced tyrosine phosphorylation. Interacts (via extracellular domain) with SVEP1. Phosphorylated in the intracellular domain on tyrosine residues. Phosphorylated on tyrosine residues by SRC. Tyrosine phosphorylation is detected upon platelet aggregation stimulated by collagen, TRAP and thrombin and platelet-platelet contacts but not after platelet activation. Tyrosine phosphorylation enhanced its association with SHC1 and SHC2. Phosphorylated in the intracellular domain on tyrosine residues. Phosphorylated when in the presence of SVEP1. As to expression, expressed in thymocytes, bone marrow stromal and osteogenic cells (at protein level). Strongly expressed in kidney and heart. Moderately expressed in lung, spleen, thymus, liver, brain, testis, skin and stomach. Expressed in hematopoietic stem progenitor cells.

It localises to the cell membrane. It is found in the cell projection. The protein resides in the lamellipodium. Required for SVEP1-mediated platelet activation, via its interaction with SVEP1 and subsequent activation of AKT/mTOR signaling. May be involved in the early stages of hematopoiesis. This is Platelet endothelial aggregation receptor 1 (Pear1) from Mus musculus (Mouse).